A 539-amino-acid chain; its full sequence is uncharacterized protein (539 aa).

6 to 20 (LIIGGGGAAARAAIE) is an FAD binding site. Active-site residues include H227 and R243.

This sequence belongs to the FAD-dependent oxidoreductase 2 family. FRD/SDH subfamily. The cofactor is FAD.

This is an uncharacterized protein from Methanocaldococcus jannaschii (strain ATCC 43067 / DSM 2661 / JAL-1 / JCM 10045 / NBRC 100440) (Methanococcus jannaschii).